The primary structure comprises 366 residues: Protein disulfide isomerase-like 2-1 (366 aa).

Residues 1-29 form the signal peptide; the sequence is MATPQISRKALASLLLLVAAAAAVSTASA. Thioredoxin domains follow at residues 30 to 138 and 139 to 257; these read DDVL…SEAA and TNVK…EKCG. Active-site nucleophile residues include Cys59, Cys62, Cys178, and Cys181. 2 disulfide bridges follow: Cys59–Cys62 and Cys178–Cys181.

Belongs to the protein disulfide isomerase family.

Its subcellular location is the secreted. It carries out the reaction Catalyzes the rearrangement of -S-S- bonds in proteins.. Acts as a protein-folding catalyst that interacts with nascent polypeptides to catalyze the formation, isomerization, and reduction or oxidation of disulfide bonds. May play a role in storage protein biogenesis. The chain is Protein disulfide isomerase-like 2-1 (PDIL2-1) from Oryza sativa subsp. japonica (Rice).